We begin with the raw amino-acid sequence, 588 residues long: Tannase (588 aa).

An N-terminal signal peptide occupies residues 1–18 (MRQHSRMAVAALAAGANA). 3 disulfides stabilise this stretch: C25-C71, C194-C502, and C261-C278. S195 serves as the catalytic Acyl-ester intermediate. 4 residues coordinate Ca(2+): D262, D265, D269, and V271. Q317 carries the post-translational modification Pyrrolidone carboxylic acid. Catalysis depends on charge relay system residues D455 and H501.

Belongs to the tannase family. In terms of assembly, heterooctamer of 4 33 kDa and 4 30 kDa subunits linked by disulfide bond(s). Post-translationally, the protein is glycosylated to a carbohydrate content of 22.7%. In terms of processing, the N-terminus of the 30 kDa subunit is blocked.

The catalysed reaction is digallate + H2O = 2 3,4,5-trihydroxybenzoate + H(+). Functionally, hydrolyzes ester bonds of tannic acid to produce gallic acid and glucose. This chain is Tannase, found in Aspergillus oryzae (strain ATCC 42149 / RIB 40) (Yellow koji mold).